The chain runs to 108 residues: UPF0102 protein Shewmr4_3685 (108 aa).

It belongs to the UPF0102 family.

In Shewanella sp. (strain MR-4), this protein is UPF0102 protein Shewmr4_3685.